The sequence spans 588 residues: Ankyrin repeat and SOCS box protein 15 (588 aa).

ANK repeat units lie at residues 75–104 (KGWF…KTLW), 110–139 (DGET…WPNT), 143–172 (KGET…SLDQ), 176–205 (KRWS…NVHL), 209–238 (FGVT…DVLA), 242–271 (DGAS…SGNI), 275–304 (AGHL…KHAI), 307–336 (SGLT…DVNS), 349–378 (ERKT…DPNL), 379–408 (DPLN…NVNC), and 416–444 (TRFP…QVEM). In terms of domain architecture, SOCS box spans 524–579 (WPEIRQILENPCSLKHLCRLKIRRLMGLQRLCQPTLMEKLSLPPTIQRYILFKEYD).

Belongs to the ankyrin SOCS box (ASB) family.

It functions in the pathway protein modification; protein ubiquitination. Its function is as follows. May be a substrate-recognition component of a SCF-like ECS (Elongin-Cullin-SOCS-box protein) E3 ubiquitin-protein ligase complex which mediates the ubiquitination and subsequent proteasomal degradation of target proteins. In Bos taurus (Bovine), this protein is Ankyrin repeat and SOCS box protein 15 (ASB15).